The following is a 347-amino-acid chain: MRIEQELKLGFKDVLFRPKRSTLKSRSQVNLTRDFTFKHSGRQWSGVPVIAANMDSVGSFAMAKALAEHGVMTAVHKHYTVEDWAEFANTADKATLNNVMVSTGTSEADFQKTKDIMAISDEFIFICIDIANGYSEHLVEYVQRVRAAFPDKVISAGNVVTGDMCEELILAGADIVKVGIGPGSVCTTRVKTGVGYPQLSAIIECGDAAHGLGGMIIGDGGCSCAGDVAKAFGGGADFVMLGGMLAGHEESGGEVIEQDGKQFMKFYGMSSKSAMDKHSGGVAGYRAAEGKTVLLPFRGSVHGTIQDILGGVRSTCTYVGAAKLKELTKRTTFIRVQEQENNVFGKE.

NADP(+) is bound at residue alanine 108–alanine 131. K(+) contacts are provided by glycine 181 and glycine 183. Cysteine 186 serves as the catalytic Thioimidate intermediate. Isoleucine 216–valine 239 lines the NADP(+) pocket.

The protein belongs to the IMPDH/GMPR family. GuaC type 1 subfamily. Homotetramer.

The enzyme catalyses IMP + NH4(+) + NADP(+) = GMP + NADPH + 2 H(+). In terms of biological role, catalyzes the irreversible NADPH-dependent deamination of GMP to IMP. It functions in the conversion of nucleobase, nucleoside and nucleotide derivatives of G to A nucleotides, and in maintaining the intracellular balance of A and G nucleotides. In Vibrio campbellii (strain ATCC BAA-1116), this protein is GMP reductase.